Consider the following 286-residue polypeptide: ATP synthase gamma chain (286 aa).

This sequence belongs to the ATPase gamma chain family. In terms of assembly, F-type ATPases have 2 components, CF(1) - the catalytic core - and CF(0) - the membrane proton channel. CF(1) has five subunits: alpha(3), beta(3), gamma(1), delta(1), epsilon(1). CF(0) has three main subunits: a, b and c.

It is found in the cell inner membrane. Produces ATP from ADP in the presence of a proton gradient across the membrane. The gamma chain is believed to be important in regulating ATPase activity and the flow of protons through the CF(0) complex. The chain is ATP synthase gamma chain from Shewanella baltica (strain OS223).